Consider the following 891-residue polypeptide: Fanconi-associated nuclease 1 homolog (891 aa).

Residues Glu712, Asp833, Glu852, and Val853 each contribute to the Mn(2+) site. Residues 770–884 form the VRR-NUC domain; that stretch reads GMAEEILIIS…GFNVEICKVR (115 aa).

It belongs to the FAN1 family. It depends on Mn(2+) as a cofactor. Mg(2+) serves as cofactor.

The protein resides in the nucleus. It carries out the reaction Hydrolytically removes 5'-nucleotides successively from the 3'-hydroxy termini of 3'-hydroxy-terminated oligonucleotides.. In terms of biological role, nuclease required for the repair of DNA interstrand cross-links (ICLs). Acts as a 5'-3' exonuclease that anchors at a cut end of DNA and cleaves DNA successively at every third nucleotide, allowing to excise an ICL from one strand through flanking incisions. May act upstream of the helicase RECQL4A and the ATPase RAD5A, which is involved in error-free post-replicative repair. Functions independently of MUS81 pathway, but in a similar pathway with RECQ4A, RAD5A and MFH1 in ICL repair. In Arabidopsis thaliana (Mouse-ear cress), this protein is Fanconi-associated nuclease 1 homolog.